A 265-amino-acid polypeptide reads, in one-letter code: Methyl-coenzyme M reductase II subunit gamma (265 aa).

Arginine 123 contacts coenzyme M.

Belongs to the methyl-coenzyme M reductase gamma subunit family. MCR is a hexamer of two alpha, two beta, and two gamma chains, forming a dimer of heterotrimers. The cofactor is coenzyme F430.

The catalysed reaction is coenzyme B + methyl-coenzyme M = methane + coenzyme M-coenzyme B heterodisulfide. Its pathway is one-carbon metabolism; methyl-coenzyme M reduction; methane from methyl-coenzyme M: step 1/1. Its function is as follows. Component of the methyl-coenzyme M reductase (MCR) I that catalyzes the reductive cleavage of methyl-coenzyme M (CoM-S-CH3 or 2-(methylthio)ethanesulfonate) using coenzyme B (CoB or 7-mercaptoheptanoylthreonine phosphate) as reductant which results in the production of methane and the mixed heterodisulfide of CoB and CoM (CoM-S-S-CoB). This is the final step in methanogenesis. This Methanothermobacter thermautotrophicus (strain ATCC 29096 / DSM 1053 / JCM 10044 / NBRC 100330 / Delta H) (Methanobacterium thermoautotrophicum) protein is Methyl-coenzyme M reductase II subunit gamma (mrtG).